The sequence spans 116 residues: Ribosome-binding factor A (116 aa).

The protein belongs to the RbfA family. In terms of assembly, monomer. Binds 30S ribosomal subunits, but not 50S ribosomal subunits or 70S ribosomes.

Its subcellular location is the cytoplasm. One of several proteins that assist in the late maturation steps of the functional core of the 30S ribosomal subunit. Associates with free 30S ribosomal subunits (but not with 30S subunits that are part of 70S ribosomes or polysomes). Required for efficient processing of 16S rRNA. May interact with the 5'-terminal helix region of 16S rRNA. This is Ribosome-binding factor A from Halalkalibacterium halodurans (strain ATCC BAA-125 / DSM 18197 / FERM 7344 / JCM 9153 / C-125) (Bacillus halodurans).